The primary structure comprises 509 residues: Histidine--tRNA ligase, cytoplasmic (509 aa).

At alanine 2 the chain carries N-acetylalanine. The 57-residue stretch at 3–59 folds into the WHEP-TRS domain; that stretch reads ERAALEELVKLQGERVRGLKQQKASAELIEEEVAKLLKLKAQLGPDESKQKFVLKTP. The residue at position 66 (serine 66) is a Phosphoserine. Residues 130-132, arginine 157, glutamine 173, aspartate 177, arginine 326, and 330-331 contribute to the L-histidine site; these read DLT and YY. Phosphoserine is present on serine 356.

This sequence belongs to the class-II aminoacyl-tRNA synthetase family. As to quaternary structure, homodimer. In terms of tissue distribution, brain, heart, liver and kidney.

It is found in the cytoplasm. The catalysed reaction is tRNA(His) + L-histidine + ATP = L-histidyl-tRNA(His) + AMP + diphosphate + H(+). Its function is as follows. Catalyzes the ATP-dependent ligation of histidine to the 3'-end of its cognate tRNA, via the formation of an aminoacyl-adenylate intermediate (His-AMP). Plays a role in axon guidance. This is Histidine--tRNA ligase, cytoplasmic from Homo sapiens (Human).